A 53-amino-acid polypeptide reads, in one-letter code: uncharacterized protein (53 aa).

Residues 14-33 (SPSSLNNNNNINSKSLQINS) show a composition bias toward low complexity. The tract at residues 14–53 (SPSSLNNNNNINSKSLQINSENKSKIQNNNPLGNKGGVQF) is disordered.

This is an uncharacterized protein from Dictyostelium discoideum (Social amoeba).